We begin with the raw amino-acid sequence, 47 residues long: Potassium channel toxin gamma-KTx 5.1 (47 aa).

4 disulfides stabilise this stretch: Cys-5/Cys-23, Cys-11/Cys-34, Cys-20/Cys-39, and Cys-24/Cys-41.

This sequence belongs to the ergtoxin family. Gamma-KTx 5 subfamily. In terms of tissue distribution, expressed by the venom gland.

It is found in the secreted. Functionally, reversibly blocks Kv11/ERG potassium channels. In Centruroides sculpturatus (Arizona bark scorpion), this protein is Potassium channel toxin gamma-KTx 5.1.